A 258-amino-acid polypeptide reads, in one-letter code: Acyl-[acyl-carrier-protein]--UDP-N-acetylglucosamine O-acyltransferase (258 aa).

It belongs to the transferase hexapeptide repeat family. LpxA subfamily. Homotrimer.

It localises to the cytoplasm. It catalyses the reaction a (3R)-hydroxyacyl-[ACP] + UDP-N-acetyl-alpha-D-glucosamine = a UDP-3-O-[(3R)-3-hydroxyacyl]-N-acetyl-alpha-D-glucosamine + holo-[ACP]. Its pathway is glycolipid biosynthesis; lipid IV(A) biosynthesis; lipid IV(A) from (3R)-3-hydroxytetradecanoyl-[acyl-carrier-protein] and UDP-N-acetyl-alpha-D-glucosamine: step 1/6. Its function is as follows. Involved in the biosynthesis of lipid A, a phosphorylated glycolipid that anchors the lipopolysaccharide to the outer membrane of the cell. This Pseudomonas entomophila (strain L48) protein is Acyl-[acyl-carrier-protein]--UDP-N-acetylglucosamine O-acyltransferase.